A 399-amino-acid polypeptide reads, in one-letter code: Argininosuccinate synthase (399 aa).

Position 9-17 (Ala9–Ser17) interacts with ATP. An L-citrulline-binding site is contributed by Tyr87. Residue Gly117 coordinates ATP. Thr119, Asn123, and Asp124 together coordinate L-aspartate. Residue Asn123 participates in L-citrulline binding. L-citrulline contacts are provided by Arg127, Ser176, Ser185, Glu261, and Tyr273.

It belongs to the argininosuccinate synthase family. Type 1 subfamily. Homotetramer.

Its subcellular location is the cytoplasm. The catalysed reaction is L-citrulline + L-aspartate + ATP = 2-(N(omega)-L-arginino)succinate + AMP + diphosphate + H(+). It functions in the pathway amino-acid biosynthesis; L-arginine biosynthesis; L-arginine from L-ornithine and carbamoyl phosphate: step 2/3. The chain is Argininosuccinate synthase from Chlorobium chlorochromatii (strain CaD3).